Consider the following 258-residue polypeptide: Synaptosomal-associated protein 29 (258 aa).

Residues 1-41 are disordered; that stretch reads MSAYPKSYNPFDDDGEDEGARPAPWRDARDLPDGPDAPADR. Positions 18 to 32 are enriched in basic and acidic residues; sequence EGARPAPWRDARDLP. The stretch at 76–107 forms a coiled coil; that stretch reads ASSEELARQRGVLERTEKMVDKMDQDLKISQK. Phosphoserine is present on residues S77, S78, and S114. A phosphothreonine mark is found at T130 and T137. Positions 150–191 are disordered; it reads ISTSKEQEAKYQASHPNLRKLDDTDPVPRGAGSAMSTDAYPK. 5 positions are modified to phosphoserine: S163, S182, S185, S204, and S210. The region spanning 196 to 258 is the t-SNARE coiled-coil homology domain; sequence RAYHQKIDSN…KSTERKVRQL (63 aa).

This sequence belongs to the SNAP-25 family. Forms a SNARE complex, composed of VAMP8, SNAP29 and STX17, involved in fusion of autophagosome with lysosome. Interacts with multiple syntaxins including STX6. Interacts with EIPR1. Interacts with STX17; this interaction is increased in the absence of TMEM39A. In terms of assembly, (Microbial infection) Interacts with Hantaan hantavirus nucleoprotein; this interaction prevents the breakdown of the viral glycoprotein N by virus-triggered autophagy. As to quaternary structure, (Microbial infection) The interaction with STX17 is decreased in presence of SARS coronavirus-2/SARS-CoV-2 ORF3A protein. In terms of tissue distribution, found in brain, heart, kidney, liver, lung, placenta, skeletal muscle, spleen and pancreas.

It localises to the cytoplasm. The protein localises to the golgi apparatus membrane. The protein resides in the cytoplasmic vesicle. Its subcellular location is the autophagosome membrane. It is found in the cell projection. It localises to the cilium membrane. In terms of biological role, SNAREs, soluble N-ethylmaleimide-sensitive factor-attachment protein receptors, are essential proteins for fusion of cellular membranes. SNAREs localized on opposing membranes assemble to form a trans-SNARE complex, an extended, parallel four alpha-helical bundle that drives membrane fusion. SNAP29 is a SNARE involved in autophagy through the direct control of autophagosome membrane fusion with the lysososome membrane. Also plays a role in ciliogenesis by regulating membrane fusions. This is Synaptosomal-associated protein 29 from Homo sapiens (Human).